The following is a 207-amino-acid chain: Large ribosomal subunit protein uL4 (207 aa).

Residues 54–74 (RSDVRGGGKKPYRQKGTGNAR) form a disordered region.

The protein belongs to the universal ribosomal protein uL4 family. In terms of assembly, part of the 50S ribosomal subunit.

One of the primary rRNA binding proteins, this protein initially binds near the 5'-end of the 23S rRNA. It is important during the early stages of 50S assembly. It makes multiple contacts with different domains of the 23S rRNA in the assembled 50S subunit and ribosome. In terms of biological role, forms part of the polypeptide exit tunnel. This Magnetococcus marinus (strain ATCC BAA-1437 / JCM 17883 / MC-1) protein is Large ribosomal subunit protein uL4.